The sequence spans 250 residues: MRAVVELLAGARRLVIFTGAGVSAESGIPTFRDALGGLWARYDPAALATPAAFADDPALVWGWYEWRRLKVLGVQPNPAHRAIAALSGRIANTRLVTQNVDDLHERAGSRDVLHLHGSLHAPRCATCAAAYRDALPDSVEPEEGRRIEPPRCPACGGQVRPGVVWFGEALPEAALREAFAAACECDLLLSVGTSGVVQPAARIPGLALEHGASVVHVNPQPVRTRHPREHCLVGPAGEVLPELLRRAFPG.

A Deacetylase sirtuin-type domain is found at 1–250 (MRAVVELLAG…PELLRRAFPG (250 aa)). An NAD(+)-binding site is contributed by 19–39 (GAGVSAESGIPTFRDALGGLW). Substrate contacts are provided by tyrosine 64 and arginine 67. An NAD(+)-binding site is contributed by 98–101 (QNVD). The active-site Proton acceptor is histidine 116. The Zn(2+) site is built by cysteine 124, cysteine 127, cysteine 152, and cysteine 155. NAD(+) contacts are provided by residues 192–194 (GTS), 218–220 (NPQ), and alanine 236.

It belongs to the sirtuin family. Class III subfamily. Requires Zn(2+) as cofactor.

The protein localises to the cytoplasm. It catalyses the reaction N(6)-acetyl-L-lysyl-[protein] + NAD(+) + H2O = 2''-O-acetyl-ADP-D-ribose + nicotinamide + L-lysyl-[protein]. The enzyme catalyses N(6)-succinyl-L-lysyl-[protein] + NAD(+) + H2O = 2''-O-succinyl-ADP-D-ribose + nicotinamide + L-lysyl-[protein]. Functionally, NAD-dependent lysine deacetylase and desuccinylase that specifically removes acetyl and succinyl groups on target proteins. Modulates the activities of several proteins which are inactive in their acylated form. This Pseudomonas aeruginosa (strain ATCC 15692 / DSM 22644 / CIP 104116 / JCM 14847 / LMG 12228 / 1C / PRS 101 / PAO1) protein is NAD-dependent protein deacylase 1.